The chain runs to 593 residues: NADH-quinone oxidoreductase subunit C/D (593 aa).

The tract at residues 1–184 (MTADNALYIP…DPYSLTLAKQ (184 aa)) is NADH dehydrogenase I subunit C. The segment at 208–593 (DYMFLNLGPN…IDFVMADVDR (386 aa)) is NADH dehydrogenase I subunit D.

In the N-terminal section; belongs to the complex I 30 kDa subunit family. The protein in the C-terminal section; belongs to the complex I 49 kDa subunit family. NDH-1 is composed of 13 different subunits. Subunits NuoB, CD, E, F, and G constitute the peripheral sector of the complex.

It localises to the cell inner membrane. The enzyme catalyses a quinone + NADH + 5 H(+)(in) = a quinol + NAD(+) + 4 H(+)(out). Its function is as follows. NDH-1 shuttles electrons from NADH, via FMN and iron-sulfur (Fe-S) centers, to quinones in the respiratory chain. The immediate electron acceptor for the enzyme in this species is believed to be ubiquinone. Couples the redox reaction to proton translocation (for every two electrons transferred, four hydrogen ions are translocated across the cytoplasmic membrane), and thus conserves the redox energy in a proton gradient. The chain is NADH-quinone oxidoreductase subunit C/D from Pseudomonas syringae pv. tomato (strain ATCC BAA-871 / DC3000).